The following is a 552-amino-acid chain: Undecaprenyl phosphate-alpha-4-amino-4-deoxy-L-arabinose arabinosyl transferase (552 aa).

11 consecutive transmembrane segments (helical) span residues 4–24, 81–101, 113–133, 176–196, 207–227, 255–275, 289–309, 313–333, 351–371, 384–404, and 411–431; these read IAGW…PLPG, FAVR…VFWL, VVAV…SYAV, FMTK…PWVI, FGPL…LAIA, APFW…LGLL, QGGD…FSIA, LPTY…GYVQ, LLVG…WGIT, VILG…SLYH, and WSAA…PQQV.

It belongs to the glycosyltransferase 83 family.

It is found in the cell inner membrane. It catalyses the reaction 4-amino-4-deoxy-alpha-L-arabinopyranosyl di-trans,octa-cis-undecaprenyl phosphate + lipid IVA = lipid IIA + di-trans,octa-cis-undecaprenyl phosphate.. It functions in the pathway lipopolysaccharide metabolism; 4-amino-4-deoxy-beta-L-arabinose-lipid A biosynthesis. Functionally, catalyzes the transfer of the L-Ara4N moiety of the glycolipid undecaprenyl phosphate-alpha-L-Ara4N to lipid A. The modified arabinose is attached to lipid A and is required for resistance to polymyxin and cationic antimicrobial peptides. The protein is Undecaprenyl phosphate-alpha-4-amino-4-deoxy-L-arabinose arabinosyl transferase of Edwardsiella ictaluri (strain 93-146).